The sequence spans 647 residues: Macrolide export ATP-binding/permease protein MacB 2 (647 aa).

Residues I6 to K244 enclose the ABC transporter domain. Residue G42 to S49 coordinates ATP. A disordered region spans residues Q223–V247. Over residues P230–A242 the composition is skewed to low complexity. 4 helical membrane-spanning segments follow: residues F273–G293, I527–V547, L581–V601, and L610–L630.

Belongs to the ABC transporter superfamily. Macrolide exporter (TC 3.A.1.122) family. In terms of assembly, homodimer. Part of the tripartite efflux system MacAB-TolC, which is composed of an inner membrane transporter, MacB, a periplasmic membrane fusion protein, MacA, and an outer membrane component, TolC. The complex forms a large protein conduit and can translocate molecules across both the inner and outer membranes. Interacts with MacA.

Its subcellular location is the cell inner membrane. Part of the tripartite efflux system MacAB-TolC. MacB is a non-canonical ABC transporter that contains transmembrane domains (TMD), which form a pore in the inner membrane, and an ATP-binding domain (NBD), which is responsible for energy generation. Confers resistance against macrolides. This Aeromonas hydrophila subsp. hydrophila (strain ATCC 7966 / DSM 30187 / BCRC 13018 / CCUG 14551 / JCM 1027 / KCTC 2358 / NCIMB 9240 / NCTC 8049) protein is Macrolide export ATP-binding/permease protein MacB 2.